The following is a 484-amino-acid chain: ATP-dependent rRNA helicase RRP3 (484 aa).

Composition is skewed to low complexity over residues 1 to 14 (MPSP…SMSQ) and 22 to 34 (PSPA…APEA). The disordered stretch occupies residues 1 to 38 (MPSPSPEASSSMSQPGPPSRSPSPASSNPDAPEASHNK). The short motif at 38–66 (KTFADLGISPELCRACASMGFKKPSDIQA) is the Q motif element. Residues 69–240 (IPHALEGKDI…RASLNKPVRV (172 aa)) form the Helicase ATP-binding domain. 82-89 (AQTGSGKT) serves as a coordination point for ATP. The DEAD box signature appears at 188-191 (DEAD). One can recognise a Helicase C-terminal domain in the interval 263-411 (NKDAYLLYLA…SFDVDKEAVA (149 aa)). Residues 425–484 (ALEMRESGTGGGGGKRGRDKGKRKTFGDGDDRDRDDDVVEAGVPRKKNKFTPGGKKKARK) are disordered. Basic residues-rich tracts occupy residues 439-448 (KRGRDKGKRK) and 468-484 (PRKK…KARK).

It belongs to the DEAD box helicase family. DDX47/RRP3 subfamily. As to quaternary structure, interacts with the SSU processome.

Its subcellular location is the nucleus. It carries out the reaction ATP + H2O = ADP + phosphate + H(+). Functionally, ATP-dependent rRNA helicase required for pre-ribosomal RNA processing. Involved in the maturation of the 35S-pre-rRNA and to its cleavage to mature 18S rRNA. This chain is ATP-dependent rRNA helicase RRP3, found in Cryptococcus neoformans var. neoformans serotype D (strain B-3501A) (Filobasidiella neoformans).